Here is a 349-residue protein sequence, read N- to C-terminus: Protein O-mannose kinase (349 aa).

Residues 1 to 19 (MGQQHGTRNGLTHRELPRG) are Cytoplasmic-facing. The helical; Signal-anchor for type II membrane protein transmembrane segment at 20–42 (VGLLLAMALMNVALYLCLDQLFI) threads the bilayer. At 43 to 349 (SPGRSTADSR…TVMSQTKEML (307 aa)) the chain is on the lumenal side. N-linked (GlcNAc...) asparagine glycosylation is found at N66, N164, and N219. The Protein kinase domain maps to 80–349 (VRQLKRVGEG…TVMSQTKEML (270 aa)).

This sequence belongs to the protein kinase superfamily. Ser/Thr protein kinase family. STKL subfamily.

The protein resides in the endoplasmic reticulum membrane. The catalysed reaction is 3-O-[beta-D-GalNAc-(1-&gt;3)-beta-D-GlcNAc-(1-&gt;4)-alpha-D-Man]-L-Thr-[protein] + ATP = 3-O-[beta-D-GalNAc-(1-&gt;3)-beta-D-GlcNAc-(1-&gt;4)-(O-6-P-alpha-D-Man)]-Thr-[protein] + ADP + H(+). Functionally, protein O-mannose kinase that specifically mediates phosphorylation at the 6-position of an O-mannose of the trisaccharide (N-acetylgalactosamine (GalNAc)-beta-1,3-N-acetylglucosamine (GlcNAc)-beta-1,4-mannose) to generate phosphorylated O-mannosyl trisaccharide (N-acetylgalactosamine-beta-1,3-N-acetylglucosamine-beta-1,4-(phosphate-6-)mannose). Phosphorylated O-mannosyl trisaccharide is a carbohydrate structure present in alpha-dystroglycan (DAG1), which is required for binding laminin G-like domain-containing extracellular proteins with high affinity. Only shows kinase activity when the GalNAc-beta-3-GlcNAc-beta-terminus is linked to the 4-position of O-mannose, suggesting that this disaccharide serves as the substrate recognition motif. The polypeptide is Protein O-mannose kinase (Pomk) (Mus musculus (Mouse)).